Consider the following 272-residue polypeptide: Undecaprenyl-diphosphatase (272 aa).

Transmembrane regions (helical) follow at residues 6–26, 45–65, 89–109, 115–135, 156–176, 189–209, 221–241, and 251–271; these read SLLV…LPVS, AKTF…VMFW, LSLI…LVFH, LFNP…LIIA, AFFI…RSGA, YAAS…ATAL, ADLP…LVAI, and ISFI…FAVF.

The protein belongs to the UppP family.

The protein localises to the cell inner membrane. The catalysed reaction is di-trans,octa-cis-undecaprenyl diphosphate + H2O = di-trans,octa-cis-undecaprenyl phosphate + phosphate + H(+). Its function is as follows. Catalyzes the dephosphorylation of undecaprenyl diphosphate (UPP). Confers resistance to bacitracin. In Cronobacter sakazakii (strain ATCC BAA-894) (Enterobacter sakazakii), this protein is Undecaprenyl-diphosphatase.